The chain runs to 402 residues: S-adenosylmethionine synthase (402 aa).

H16 lines the ATP pocket. Position 18 (D18) interacts with Mg(2+). E44 serves as a coordination point for K(+). E57 and Q103 together coordinate L-methionine. Positions 103–113 are flexible loop; sequence QSPDIAQGVDT. ATP-binding positions include 178-180, 249-250, D258, 264-265, A281, and K285; these read DGK, KF, and RK. D258 is a binding site for L-methionine. Residue K289 participates in L-methionine binding.

It belongs to the AdoMet synthase family. Homotetramer; dimer of dimers. Mg(2+) is required as a cofactor. It depends on K(+) as a cofactor.

It is found in the cytoplasm. The catalysed reaction is L-methionine + ATP + H2O = S-adenosyl-L-methionine + phosphate + diphosphate. It functions in the pathway amino-acid biosynthesis; S-adenosyl-L-methionine biosynthesis; S-adenosyl-L-methionine from L-methionine: step 1/1. In terms of biological role, catalyzes the formation of S-adenosylmethionine (AdoMet) from methionine and ATP. The overall synthetic reaction is composed of two sequential steps, AdoMet formation and the subsequent tripolyphosphate hydrolysis which occurs prior to release of AdoMet from the enzyme. This is S-adenosylmethionine synthase from Mycolicibacterium gilvum (strain PYR-GCK) (Mycobacterium gilvum (strain PYR-GCK)).